A 1663-amino-acid chain; its full sequence is Cortactin-binding protein 2 (1663 aa).

5 disordered regions span residues 1–23, 203–222, 359–440, 454–478, and 498–617; these read MATD…AGAA, KKKT…RSTE, QASH…LHPG, GNAN…SPTS, and RFTS…KPSI. Residues 119–276 adopt a coiled-coil conformation; it reads KKMQERMSAQ…EQLKRGSDSK (158 aa). Residues 386-396 are compositionally biased toward low complexity; sequence PSTGSTPDPTS. Residue Arg498 is modified to Asymmetric dimethylarginine. The span at 583–593 shows a compositional bias: polar residues; it reads TVASPPSSLPQ. 6 ANK repeats span residues 709–739, 743–772, 776–805, 809–838, 842–871, and 912–942; these read GRPT…DINY, DGHS…QVNA, NGFT…NINH, GGQT…NRSV, DGWT…PARG, and EGWT…EPER. Residues 1446–1485 form a disordered region; it reads NKKKGESGAWRKVNTSPRRKSGRFSLPTWNKPDLSTEGMK. Ser1524 is modified (phosphoserine). Positions 1580–1663 are disordered; sequence SQKEVSPLSS…KNEHLEKPNK (84 aa). The segment covering 1582–1599 has biased composition (polar residues); the sequence is KEVSPLSSHQTTECSNSK. A compositionally biased stretch (low complexity) spans 1624-1638; that stretch reads SQNTKRSSSSSNTRQ. Positions 1645–1663 are enriched in basic and acidic residues; that stretch reads SKEENWNLHKNEHLEKPNK.

Interacts with CTTN/cortactin SH3 domain. Interacts with STRN, STRN4/zinedin and MOB4/phocein; this interactions mediate the association with the STRIPAK core complex and may regulate dendritic spine distribution of the STRIPAK complex in hippocampal neurons. Activation of glutamate receptors weakens the interaction with STRN and STRN4.

Its subcellular location is the cytoplasm. It is found in the cell cortex. The protein resides in the cell projection. It localises to the dendritic spine. Functionally, regulates the dendritic spine distribution of CTTN/cortactin in hippocampal neurons, and thus controls dendritic spinogenesis and dendritic spine maintenance. Associates with the striatin-interacting phosphatase and kinase (STRIPAK) core complex to regulate dendritic spine distribution of the STRIPAK complex in hippocampal neurons. The chain is Cortactin-binding protein 2 (CTTNBP2) from Pongo abelii (Sumatran orangutan).